Consider the following 575-residue polypeptide: Urease subunit alpha (575 aa).

In terms of domain architecture, Urease spans G138 to F575. The Ni(2+) site is built by H143, H145, and K226. At K226 the chain carries N6-carboxylysine. H228 contributes to the substrate binding site. Residues H255 and H281 each contribute to the Ni(2+) site. H329 acts as the Proton donor in catalysis. D369 contributes to the Ni(2+) binding site.

Belongs to the metallo-dependent hydrolases superfamily. Urease alpha subunit family. Heterotrimer of UreA (gamma), UreB (beta) and UreC (alpha) subunits. Three heterotrimers associate to form the active enzyme. Ni cation is required as a cofactor. In terms of processing, carboxylation allows a single lysine to coordinate two nickel ions.

It localises to the cytoplasm. The enzyme catalyses urea + 2 H2O + H(+) = hydrogencarbonate + 2 NH4(+). It participates in nitrogen metabolism; urea degradation; CO(2) and NH(3) from urea (urease route): step 1/1. The sequence is that of Urease subunit alpha from Frankia casuarinae (strain DSM 45818 / CECT 9043 / HFP020203 / CcI3).